The primary structure comprises 1375 residues: DNA-directed RNA polymerase subunit beta' (1375 aa).

Cys70, Cys72, Cys85, and Cys88 together coordinate Zn(2+). Positions 461, 463, and 465 each coordinate Mg(2+). Zn(2+)-binding residues include Cys797, Cys871, Cys878, and Cys881.

Belongs to the RNA polymerase beta' chain family. As to quaternary structure, the RNAP catalytic core consists of 2 alpha, 1 beta, 1 beta' and 1 omega subunit. When a sigma factor is associated with the core the holoenzyme is formed, which can initiate transcription. Requires Mg(2+) as cofactor. Zn(2+) serves as cofactor.

It catalyses the reaction RNA(n) + a ribonucleoside 5'-triphosphate = RNA(n+1) + diphosphate. In terms of biological role, DNA-dependent RNA polymerase catalyzes the transcription of DNA into RNA using the four ribonucleoside triphosphates as substrates. In Neorickettsia sennetsu (strain ATCC VR-367 / Miyayama) (Ehrlichia sennetsu), this protein is DNA-directed RNA polymerase subunit beta'.